An 898-amino-acid polypeptide reads, in one-letter code: Protein argonaute 1 (898 aa).

The disordered stretch occupies residues 1-52 (MLALNAGSQYPGRGRGRGRGDGGNRVHKHDGINRYHGGFRGGRGGGGGGFRD). Residues 18–33 (GRGDGGNRVHKHDGIN) are compositionally biased toward basic and acidic residues. The segment covering 38–50 (GFRGGRGGGGGGF) has biased composition (gly residues). The PAZ domain occupies 283–378 (KCSDEMRRLR…IFADRTKMSR (96 aa)). Positions 542 to 883 (FAMVKLRTKE…YARKYGSLKS (342 aa)) constitute a Piwi domain.

This sequence belongs to the argonaute family.

It localises to the cytoplasm. In terms of biological role, involved in RNA-mediated gene silencing (RNAi) of mobile elements and repeats including retroposons SLACS (Spliced Leader Associated Conserved Sequence), TATE (Telomere-Associated Transposable Element) and TAS-like sequences (Telomere Associated Sequence), and a family of 74-nucleotide long tandem repeats, CIR74. Predominantly binds to siRNAs derived from SLACS and TATE transposable elements and to a lesser extent to siRNAs from TAS-like and CIR74 elements. The protein is Protein argonaute 1 of Leishmania braziliensis.